The following is a 153-amino-acid chain: Aspartate carbamoyltransferase regulatory chain (153 aa).

Positions 109, 114, 138, and 141 each coordinate Zn(2+).

This sequence belongs to the PyrI family. Contains catalytic and regulatory chains. The cofactor is Zn(2+).

Functionally, involved in allosteric regulation of aspartate carbamoyltransferase. The sequence is that of Aspartate carbamoyltransferase regulatory chain from Enterobacter sp. (strain 638).